The primary structure comprises 1226 residues: MAGSNIKVQIEKQLSERILLIDGGMGTMIQGYKFEEEDYRGERFNKWHCDLKGNNDLLVLSQPQIIRDIHEAYLEAGADILETNTFNATTIAMADYDMESLSEEINFEAAKLAREVADKWTEKTPNKPRYVAGVLGPTNRTCSISPDVNDPGFRNVSFDELVEAYSESTRALIRGGSDLILIETIFDTLNAKACSFAVESVFEELDITLPVMISGTITDASGRTLSGQTTEAFYNALRHVKPISFGLNCALGPDELREYVSDLSRISECYVSAHPNAGLPNAFGEYDLSPEDMAEHVAEWASSGFLNLIGGCCGTTPEHIRQMALVVEGVKPRQLPELPVACRLSGLEPLTIEKDSLFINVGERTNVTGSARFKRLIKEELYDEALSVAQEQVENGAQIIDINMDEGMLDAEACMVRFLNLCASEPEISKVPVMVDSSKWEVIEAGLKCIQGKGIVNSISLKEGKEKFVHQAKLIRRYGAAVIVMAFDEVGQADTRERKIEICTNAYNILVDEVGFPPEDIIFDPNIFAVATGIDEHNNYAVDFIEAVGDIKRTLPHAMISGGVSNVSFSFRGNNYVREAIHAVFLYHCFKNGMDMGIVNAGQLEIYDNVPEDLREAVEDVVLNRRDDSTERLLDIATEYLERAVGKVEDKSALEWRDWPVEKRLEHSLVKGITEFIVEDTEEARINAEKPIEVIEGPLMDGMNVVGDLFGEGKMFLPQVVKSARVMKQAVAHLEPFINASKEVGATNGKILLATVKGDVHDIGKNIVGVVLQCNNYEIIDLGVMVSCETILKVAKEENVDIIGLSGLITPSLDEMVHVAKEMERQGFDLPLLIGGATTSKAHTAVKIEQNYSQPVVYVNNASRAVGVCTSLLSDELKPSFVEKLDIDYERVREQHSRKQPRTKPVTLEVARANKVAIDWASYTPPVPLKPGVHIFDNFDVSTLRNYIDWTPFFMTWSLVGKYPKILDHEEVGEEAKRLFKDANDLLDRVEKEGLLKARGMCALFPASSVGDDIEVYTDESRTKVAKVLHNLRQQTEKPKGFNYCLSDYIAPKESGKNDWIGGFAVTGGIGERELADEYKANGDDYNAIMIQAVADRLAEAFAEYLHEKVRKEIWGYSPNETLSNDDLIREKYQGIRPAPGYPACPEHTEKGALWELMNVEESIGMSLTSSYAMWPGASVSGMYFSHPDSRYFAIAQIQQDQAESYADRKGWNMLEAEKWLGPNLN.

The 321-residue stretch at 7–327 (KVQIEKQLSE…EHIRQMALVV (321 aa)) folds into the Hcy-binding domain. Positions 249, 312, and 313 each coordinate Zn(2+). The Pterin-binding domain occupies 358–619 (FINVGERTNV…VPEDLREAVE (262 aa)). One can recognise a B12-binding N-terminal domain in the interval 652–746 (SALEWRDWPV…FINASKEVGA (95 aa)). Methylcob(III)alamin-binding positions include glutamate 696, 758-762 (GDVHD), histidine 761, serine 806, threonine 810, and alanine 862. The B12-binding domain maps to 748-883 (NGKILLATVK…SDELKPSFVE (136 aa)). The AdoMet activation domain occupies 899–1226 (KQPRTKPVTL…AEKWLGPNLN (328 aa)). S-adenosyl-L-methionine contacts are provided by residues aspartate 949, arginine 1137, and 1192 to 1193 (YF).

This sequence belongs to the vitamin-B12 dependent methionine synthase family. Requires methylcob(III)alamin as cofactor. Zn(2+) is required as a cofactor.

It carries out the reaction (6S)-5-methyl-5,6,7,8-tetrahydrofolate + L-homocysteine = (6S)-5,6,7,8-tetrahydrofolate + L-methionine. Its pathway is amino-acid biosynthesis; L-methionine biosynthesis via de novo pathway; L-methionine from L-homocysteine (MetH route): step 1/1. Functionally, catalyzes the transfer of a methyl group from methyl-cobalamin to homocysteine, yielding enzyme-bound cob(I)alamin and methionine. Subsequently, remethylates the cofactor using methyltetrahydrofolate. The chain is Methionine synthase (metH) from Aliivibrio fischeri (strain ATCC 700601 / ES114) (Vibrio fischeri).